A 462-amino-acid polypeptide reads, in one-letter code: Squalene synthase LSS (462 aa).

Residues R48 and R73 each coordinate NADP(+). Residues D76, E79, and D80 each contribute to the Mg(2+) site. 3 residues coordinate NADP(+): R214, K314, and R316. A run of 2 helical transmembrane segments spans residues 399-419 and 436-456; these read LVLVLGLGYCVYAFNLLPLLW and LGLPHQIIAVFCVLTAGYQVF.

Belongs to the phytoene/squalene synthase family. The cofactor is Mg(2+).

The protein resides in the membrane. It carries out the reaction 2 (2E,6E)-farnesyl diphosphate + NADH + H(+) = squalene + 2 diphosphate + NAD(+). The enzyme catalyses 2 (2E,6E)-farnesyl diphosphate + NADPH + H(+) = squalene + 2 diphosphate + NADP(+). Functionally, converts farnesyl diphosphate (FPP) into squalene, a precursor for sterol biosynthesis in eukaryotes. The protein is Squalene synthase LSS of Botryococcus braunii (Green alga).